Reading from the N-terminus, the 200-residue chain is Ubiquinol-cytochrome-c reductase complex assembly factor 1 (200 aa).

The protein belongs to the CBP3 family.

The protein resides in the mitochondrion inner membrane. Its function is as follows. Required for the assembly of the ubiquinol-cytochrome c reductase complex (mitochondrial respiratory chain complex III or cytochrome b-c1 complex). May be involved in cytochrome b translation and/or stability. This Xenopus laevis (African clawed frog) protein is Ubiquinol-cytochrome-c reductase complex assembly factor 1 (uqcc1).